Reading from the N-terminus, the 228-residue chain is Carboxy-S-adenosyl-L-methionine synthase (228 aa).

Residues Tyr30, Gly55–Ser57, Asp79–Asn80, and Asp103–Val104 contribute to the S-adenosyl-L-methionine site.

This sequence belongs to the class I-like SAM-binding methyltransferase superfamily. Cx-SAM synthase family.

The catalysed reaction is prephenate + S-adenosyl-L-methionine = carboxy-S-adenosyl-L-methionine + 3-phenylpyruvate + H2O. Catalyzes the conversion of S-adenosyl-L-methionine (SAM) to carboxy-S-adenosyl-L-methionine (Cx-SAM). This Staphylococcus epidermidis (strain ATCC 35984 / DSM 28319 / BCRC 17069 / CCUG 31568 / BM 3577 / RP62A) protein is Carboxy-S-adenosyl-L-methionine synthase.